The chain runs to 550 residues: Zinc finger protein 426 (550 aa).

In terms of domain architecture, KRAB spans 39-110 (VSFEDVIVDF…KIVFPEWKLQ (72 aa)). 11 C2H2-type zinc fingers span residues 219 to 241 (FECSDCGKSFMSQSHLQTHQRTH), 274 to 296 (HRCKECGKGYRYPAYLNIHMRTH), 302 to 324 (YECKECGKAFNYSNSFQIHGRTH), 330 to 352 (YVCSQCGKAFTQHSGLSIHVRSH), 358 to 380 (YGCKECGKAFLTSSRLIQHIRTH), 386 to 408 (FVCVKCGKAFAISSNLNGHLKLH), 414 to 436 (CECKICGKAFGYLSCLNNHMRTH), 442 to 464 (YTCKECGKAFNYSTHLKIHMRIH), 470 to 492 (YECKQCGKAFSHSTSFQIHERTH), 498 to 522 (YECKECGKAFICPSSFRIHEISHTH), and 528 to 550 (YKCQQCGKAYSHPRSLRRHERIH).

The protein localises to the nucleus. Functionally, may be involved in transcriptional regulation. In Mus musculus (Mouse), this protein is Zinc finger protein 426 (Znf426).